The sequence spans 369 residues: Anhydro-N-acetylmuramic acid kinase (369 aa).

Residue 12–19 (GTSLDGVD) participates in ATP binding.

This sequence belongs to the anhydro-N-acetylmuramic acid kinase family.

It carries out the reaction 1,6-anhydro-N-acetyl-beta-muramate + ATP + H2O = N-acetyl-D-muramate 6-phosphate + ADP + H(+). The protein operates within amino-sugar metabolism; 1,6-anhydro-N-acetylmuramate degradation. It participates in cell wall biogenesis; peptidoglycan recycling. Functionally, catalyzes the specific phosphorylation of 1,6-anhydro-N-acetylmuramic acid (anhMurNAc) with the simultaneous cleavage of the 1,6-anhydro ring, generating MurNAc-6-P. Is required for the utilization of anhMurNAc either imported from the medium or derived from its own cell wall murein, and thus plays a role in cell wall recycling. In Shigella flexneri serotype 5b (strain 8401), this protein is Anhydro-N-acetylmuramic acid kinase.